Consider the following 918-residue polypeptide: Glutamate receptor ionotropic, kainate 1 (918 aa).

A signal peptide spans methionine 1–proline 30. Over glutamine 31–proline 576 the chain is Extracellular. 7 N-linked (GlcNAc...) asparagine glycosylation sites follow: asparagine 68, asparagine 74, asparagine 276, asparagine 379, asparagine 428, asparagine 439, and asparagine 446. Positions 531, 533, and 538 each coordinate L-glutamate. N-linked (GlcNAc...) asparagine glycosylation occurs at asparagine 561. The chain crosses the membrane as a helical span at residues aspartate 577 to alanine 597. The Cytoplasmic portion of the chain corresponds to arginine 598 to glycine 653. The chain crosses the membrane as a helical span at residues isoleucine 654–leucine 674. The Extracellular portion of the chain corresponds to threonine 675–asparagine 834. L-glutamate is bound by residues serine 704 and threonine 705. At serine 725 the chain carries Phosphoserine; by PKC. L-glutamate is bound at residue glutamate 753. A Phosphothreonine; by PKC modification is found at threonine 761. A disulfide bridge connects residues cysteine 765 and cysteine 819. Asparagine 766 carries an N-linked (GlcNAc...) asparagine glycan. The chain crosses the membrane as a helical span at residues isoleucine 835–glycine 855. The Cytoplasmic portion of the chain corresponds to glutamate 856–valine 918.

The protein belongs to the glutamate-gated ion channel (TC 1.A.10.1) family. GRIK1 subfamily. In terms of assembly, homotetramer or heterotetramer of pore-forming glutamate receptor subunits. Tetramers may be formed by the dimerization of dimers. Can form functional heteromeric receptors with GRIK5. Can form functional heteromeric receptors with GRIK4. Interacts with KLHL17.

The protein localises to the cell membrane. The protein resides in the postsynaptic cell membrane. It catalyses the reaction Ca(2+)(in) = Ca(2+)(out). Ionotropic glutamate receptor that functions as a cation-permeable ligand-gated ion channel, gated by L-glutamate and the glutamatergic agonist kainic acid. L-glutamate acts as an excitatory neurotransmitter at many synapses in the central nervous system. Binding of the excitatory neurotransmitter L-glutamate induces a conformation change, leading to the opening of the cation channel, and thereby converts the chemical signal to an electrical impulse. The receptor then desensitizes rapidly and enters a transient inactive state, characterized by the presence of bound agonist. Functionally, ionotropic glutamate receptor that functions as a cation-permeable ligand-gated ion channel, gated by L-glutamate and the glutamatergic agonist kainic acid. This chain is Glutamate receptor ionotropic, kainate 1 (GRIK1), found in Homo sapiens (Human).